Reading from the N-terminus, the 68-residue chain is ATP synthase protein 8 (68 aa).

A helical transmembrane segment spans residues 8-24; that stretch reads VWPTIIMSMLLALFLLM. At Lys54 the chain carries N6-acetyllysine; alternate. The residue at position 54 (Lys54) is an N6-succinyllysine; alternate. Residue Lys57 is modified to N6-acetyllysine.

It belongs to the ATPase protein 8 family. In terms of assembly, F-type ATPases have 2 components, CF(1) - the catalytic core - and CF(0) - the membrane proton channel. Component of an ATP synthase complex composed of ATP5PB, ATP5MC1, ATP5F1E, ATP5PD, ATP5ME, ATP5PF, ATP5MF, MT-ATP6, MT-ATP8, ATP5F1A, ATP5F1B, ATP5F1D, ATP5F1C, ATP5PO, ATP5MG, ATP5MK and ATP5MJ. Interacts with PRICKLE3.

Its subcellular location is the mitochondrion membrane. In terms of biological role, mitochondrial membrane ATP synthase (F(1)F(0) ATP synthase or Complex V) produces ATP from ADP in the presence of a proton gradient across the membrane which is generated by electron transport complexes of the respiratory chain. F-type ATPases consist of two structural domains, F(1) - containing the extramembraneous catalytic core and F(0) - containing the membrane proton channel, linked together by a central stalk and a peripheral stalk. During catalysis, ATP synthesis in the catalytic domain of F(1) is coupled via a rotary mechanism of the central stalk subunits to proton translocation. Part of the complex F(0) domain. Minor subunit located with subunit a in the membrane. The protein is ATP synthase protein 8 (MT-ATP8) of Hylobates lar (Lar gibbon).